The following is a 99-amino-acid chain: Small ribosomal subunit protein uS14c (99 aa).

The disordered stretch occupies residues 46–66; that stretch reads LQSSPRNSAPTRLHRRCSSTG.

This sequence belongs to the universal ribosomal protein uS14 family. Part of the 30S ribosomal subunit.

The protein localises to the plastid. It is found in the chloroplast. In terms of biological role, binds 16S rRNA, required for the assembly of 30S particles. This is Small ribosomal subunit protein uS14c from Pinus thunbergii (Japanese black pine).